The following is a 389-amino-acid chain: Putative F-box protein At3g10240 (389 aa).

Residues 1-26 (MEQQEEKRKIKAYQRKSKRSKSGSSS) are disordered. A compositionally biased stretch (basic residues) spans 9–21 (KIKAYQRKSKRSK). The F-box domain occupies 21 to 66 (KSGSSSIPLDLVSEILLRLPEKSVARFRCVSKPWSSITTEPYFINL).

This is Putative F-box protein At3g10240 from Arabidopsis thaliana (Mouse-ear cress).